The sequence spans 422 residues: Osteomodulin (422 aa).

A signal peptide spans 1-20 (MGFSSLVCVLFFFLGVKVYC). The propeptide occupies 21–27 (QYESYQW). Sulfotyrosine is present on residues Tyr-22, Tyr-25, Tyr-31, Tyr-39, Tyr-51, and Tyr-77. The region spanning 53–91 (APFHQHTLGCASECFCPPNFPSSMYCDNRKLKTIPNIPA) is the LRRNT domain. 11 LRR repeats span residues 92–113 (HIQQ…SFIN), 116–129 (HLKE…KIKS), 142–164 (NLLQ…PKSL), 165–184 (ERIF…AVNG), 187–207 (NLTM…QEKV), 213–233 (KLMQ…GLPS), 234–255 (SLMY…YFNK), 258–280 (KLHA…FNLS), 281–294 (NLIE…KLKQ), 301–322 (NLEH…VMCP), and 331–353 (HLTH…IFLC). N-linked (GlcNAc...) asparagine glycans are attached at residues Asn-113 and Asn-121. Residue Asn-187 is glycosylated (N-linked (GlcNAc...) asparagine). N-linked (GlcNAc...) asparagine glycosylation is found at Asn-242 and Asn-278. Residue Asn-316 is glycosylated (N-linked (GlcNAc...) asparagine). Cys-321 and Cys-353 form a disulfide bridge. Residues 385-422 (DDGDSEDHDDHHEGPEEEGTEENIDAHYYGSQEWQETI) are disordered. A sulfotyrosine mark is found at Tyr-412 and Tyr-413.

Belongs to the small leucine-rich proteoglycan (SLRP) family. SLRP class II subfamily. In terms of assembly, binds the alpha(V)beta(3)-integrin. The N-terminus is blocked. Post-translationally, glycosylated; contains keratan sulfate. In terms of processing, sulfated on tyrosine residue(s). Bone specific (at protein level).

It is found in the secreted. The protein resides in the extracellular space. Its subcellular location is the extracellular matrix. Its function is as follows. May be implicated in biomineralization processes. Has a function in binding of osteoblasts via the alpha(V)beta(3)-integrin. The polypeptide is Osteomodulin (OMD) (Bos taurus (Bovine)).